A 251-amino-acid chain; its full sequence is Hydroxyacylglutathione hydrolase (251 aa).

Positions 53, 55, 57, 58, 110, 127, and 165 each coordinate Zn(2+).

The protein belongs to the metallo-beta-lactamase superfamily. Glyoxalase II family. As to quaternary structure, monomer. Zn(2+) is required as a cofactor.

The catalysed reaction is an S-(2-hydroxyacyl)glutathione + H2O = a 2-hydroxy carboxylate + glutathione + H(+). Its pathway is secondary metabolite metabolism; methylglyoxal degradation; (R)-lactate from methylglyoxal: step 2/2. Functionally, thiolesterase that catalyzes the hydrolysis of S-D-lactoyl-glutathione to form glutathione and D-lactic acid. The chain is Hydroxyacylglutathione hydrolase from Shigella dysenteriae serotype 1 (strain Sd197).